The chain runs to 243 residues: E3 ubiquitin-protein ligase RMA3 (243 aa).

Residues 44–92 (CNICLDTAHDPVVTLCGHLFCWPCIYKWLHVQLSSVSVDQHQNNCPVCK) form an RING-type zinc finger. Positions 110–135 (SPSSTFGSKKQDALSTDIPRRPAPSA) are disordered. The chain crosses the membrane as a helical; Anchor for type IV membrane protein span at residues 223–243 (KSLNRVSIFFLCCIILCLLLF).

As to expression, ubiquitous. Highly expressed in roots.

It localises to the endoplasmic reticulum membrane. It catalyses the reaction S-ubiquitinyl-[E2 ubiquitin-conjugating enzyme]-L-cysteine + [acceptor protein]-L-lysine = [E2 ubiquitin-conjugating enzyme]-L-cysteine + N(6)-ubiquitinyl-[acceptor protein]-L-lysine.. It functions in the pathway protein modification; protein ubiquitination. E3 ubiquitin-protein ligase. This Arabidopsis thaliana (Mouse-ear cress) protein is E3 ubiquitin-protein ligase RMA3 (RMA3).